The primary structure comprises 311 residues: Serine hydrolase-like protein (311 aa).

The AB hydrolase-1 domain maps to 27–227; sequence PPVLCLHGWL…FVSKEMFVHS (201 aa). Ser102 is a catalytic residue. Ser210 is modified (phosphoserine).

Belongs to the AB hydrolase superfamily. In terms of tissue distribution, ubiquitous. High protein expression in skeletal and cardiac muscle.

It is found in the cytoplasm. Its subcellular location is the perinuclear region. It localises to the peroxisome. Its function is as follows. Probable serine hydrolase. May be related to cell muscle hypertrophy. The sequence is that of Serine hydrolase-like protein (Serhl) from Mus musculus (Mouse).